We begin with the raw amino-acid sequence, 153 residues long: Jacalin-related lectin Calsepa (153 aa).

Ala-2 bears the N-acetylalanine mark. Residues 6–152 form the Jacalin-type lectin domain; the sequence is DTISGPWGNN…VDAIGTYNRH (147 aa). N-glycan binding regions lie at residues 17-18, 95-96, and 140-144; these read GN, DN, and GYYVD.

The protein belongs to the jacalin lectin family. As to quaternary structure, homodimer. In terms of processing, not glycosylated. As to expression, rhizome (at protein level). Detected in the cortex and the pith of rhizome. Not detected in vascular tissues, pericycle, endodermis or rhizodermis.

It localises to the cytoplasm. With respect to regulation, hemagglutinating activity is most inhibited by methyl alpha-mannopyranoside. This activity is inhibited to a less extent (about a third of the inhibition of that of methyl alpha-mannopyranoside) by methyl alpha-glucoside, other alpha-glucosides, such as maltose, isomaltose, panose or palatinose, and alpha-glucosides modified at the second position, such as methyl 2-deoxy-alpha-arabinoglucopyranoside or methyl 2-acetamido-2-deoxy alpha-glucopyranoside. Mildly inhibited by free monosaccharides, with glucose presenting at least 20-fold less inhibitory effect on hemagglutinating activity than mannose. Glycoproteins are somewhat inhibitory, the best being asialothyroglobulin and ovomucoid. Not inhibited by isomaltitol, sucrose or trehalose. Its function is as follows. Mannose-binding lectin. Preferentially binds mannose at concentrations ranging between 5 and 25 mM, but also binds glucose. Has a marked preference for methylated sugar derivatives, such as alpha-MeMan and alpha-MeGlc, at concentration down to 5 mM. Binds to N-glycans, but not to glycolipid-type or other type of glycans. Binds N-linked high-mannose-type glycans. Has a preference for smaller (Man(2)-Man(6)) high-mannose-type glycans to larger (Man(7)-Man(9)) ones. Recognizes both alpha1-6 extended and alpha1-3 extended monoantennary glycans. The addition of alpha1-2Man to the Man-alpha1-3Man-beta branch results in a significant loss of affinity, but beta1-2GlcNAc has some affinity. Has less affinity for biantennary glycans. However, affinity is significant for the biantennary complex-type N-glycans with bisecting GlcNAc. No affinity is observed for tri- and tetra-antennary glycans. Binds bisected glycans of the mouse brain. Selectively binds to bisecting N-glycans which are in back-fold conformation, and does not favor a glycan with an extend conformation. Has hemagglutinating activity against rabbit erythrocytes at 0.3 ug/ml and against trypsin-treated human erythrocytes at 5 ug/ml. Has mitogenic activity in murine cells. The sequence is that of Jacalin-related lectin Calsepa from Calystegia sepium (Hedge bindweed).